The primary structure comprises 309 residues: MLVDLDEILVSLKEGRHIPEETVYALCMDSQELLMNESNVARVDTPVTICGDIHGQLHDLLTLFEKSGGVEKTRYVFLGDFVDRGFYSLESFLLLLVYKLRYPDRITLIRGNHETRQITKVYGFYDEVMRKYGNSNVWRYCCEVFDYLSLGAIINDSIFCVHGGLSPDITTLNEIRAIDRKQEVPHEGGMCDLLWSDPDEVDTWSMSPRGAGFLFGKGEVDEFLHVNNVDLIARAHQLVMEGYKEMFDGGLVTVWSAPNYCYRCGNVAAVLKIEDNLERKYTIFEAVQAQNGVGNTIIPTKKAQMDYFL.

Mn(2+) is bound by residues Asp-52, His-54, Asp-80, and Asn-112. His-113 acts as the Proton donor in catalysis. The Mn(2+) site is built by His-162 and His-236. Leu-309 bears the Leucine methyl ester mark.

It belongs to the PPP phosphatase family. PP-4 (PP-X) subfamily. Catalytic subunit of the histone H2A phosphatase complex (HTP-C) containing PPH3, PSY2 and PSY4. The cofactor is Mn(2+).

It localises to the cytoplasm. The protein resides in the nucleus. It carries out the reaction O-phospho-L-seryl-[protein] + H2O = L-seryl-[protein] + phosphate. The enzyme catalyses O-phospho-L-threonyl-[protein] + H2O = L-threonyl-[protein] + phosphate. Its function is as follows. Forms the histone H2A phosphatase complex in association with the regulatory subunits PSY2 and PSY4, which dephosphorylates H2AS128ph (gamma-H2A) that has been displaced from sites of DNA lesions in the double-stranded DNA break repair process. Dephosphorylation is necessary for efficient recovery from the DNA damage checkpoint. The sequence is that of Serine/threonine-protein phosphatase 4 catalytic subunit (PPH3) from Candida glabrata (strain ATCC 2001 / BCRC 20586 / JCM 3761 / NBRC 0622 / NRRL Y-65 / CBS 138) (Yeast).